The primary structure comprises 181 residues: Malignant T-cell-amplified sequence 1-A (181 aa).

Residues 92 to 171 enclose the PUA domain; that stretch reads LPHQQVDKGA…IGIENIHYLN (80 aa).

This sequence belongs to the MCTS1 family.

Its subcellular location is the cytoplasm. Functionally, plays a role as translation enhancer and involved in cell cycle regulation. The chain is Malignant T-cell-amplified sequence 1-A (mcts1-a) from Xenopus laevis (African clawed frog).